The sequence spans 734 residues: Probable inactive histone-lysine N-methyltransferase SUVR1 (734 aa).

Residues 61 to 163 are disordered; that stretch reads QSTEKNKKEE…LPPLKRYVRR (103 aa). The span at 62-81 shows a compositional bias: basic and acidic residues; it reads STEKNKKEEEKKKKEEEKKS. Residues 98–109 are compositionally biased toward acidic residues; that stretch reads VQDEEDDMDEDE. Residues 113–122 are compositionally biased toward basic residues; it reads KRRLRSRRGR. The span at 123–132 shows a compositional bias: low complexity; that stretch reads ASSSSSSSSS. Zn(2+)-binding residues include cysteine 460, cysteine 464, cysteine 468, cysteine 477, cysteine 545, cysteine 549, cysteine 551, and cysteine 555. The region spanning 460–563 is the Pre-SET domain; it reads CSTSCIEDCL…RCGNRVVQRG (104 aa). The SET domain occupies 566–696; the sequence is NKLQVFFTPN…AMEELAWDYG (131 aa). S-adenosyl-L-methionine is bound by residues 577–579 and 652–653; these read KGW and NH. A Zn(2+)-binding site is contributed by cysteine 655. Tyrosine 695 serves as a coordination point for S-adenosyl-L-methionine. The 17-residue stretch at 707-723 folds into the Post-SET domain; the sequence is KPFDCLCGSRFCRNKKR. Positions 711, 713, and 718 each coordinate Zn(2+).

It belongs to the class V-like SAM-binding methyltransferase superfamily. Histone-lysine methyltransferase family. Interacts with SUVR2 and itself.

It localises to the nucleus. It is found in the chromosome. Probable inactive histone-lysine methyltransferase that acts as regulator of transctiptional gene silencing independently of histone H3K9 methylation. Contributes to transcriptional gene silencing at RNA-directed DNA methylation (RdDM) target loci but also at RdDM-independent target loci. This Arabidopsis thaliana (Mouse-ear cress) protein is Probable inactive histone-lysine N-methyltransferase SUVR1 (SUVR1).